We begin with the raw amino-acid sequence, 1560 residues long: MEPGSDDFLPPPECPVFEPSWAEFRDPLGYIAKIRPIAEKSGICKIRPPADWQPPFAVEVDNFRFTPRIQRLNELEAQTRVKLNYLDQIAKFWEIQGSSLKIPNVERRILDLYSLSKIVVEEGGYEAICKDRRWARVAQRLNYPPGKNIGSLLRSHYERIVYPYEMYQSGANLVQCNTRPFDNEEKDKEYKPHSIPLRQSVQPSKFNSYGRRAKRLQPDPEPTEEDIEKNPELKKLQIYGAGPKMMGLGLMAKDKTLRKKDKEGPECPPTVVVKEELGGDVKVESTSPKTFLESKEELSHSPEPCTKMTMRLRRNHSNAQFIESYVCRMCSRGDEDDKLLLCDGCDDNYHIFCLLPPLPEIPKGVWRCPKCVMAECKRPPEAFGFEQATREYTLQSFGEMADSFKADYFNMPVHMVPTELVEKEFWRLVNSIEEDVTVEYGADIHSKEFGSGFPVSDSKRHLTPEEEEYATSGWNLNVMPVLEQSVLCHINADISGMKVPWLYVGMVFSAFCWHIEDHWSYSINYLHWGEPKTWYGVPSLAAEHLEEVMKKLTPELFDSQPDLLHQLVTLMNPNTLMSHGVPVVRTNQCAGEFVITFPRAYHSGFNQGYNFAEAVNFCTADWLPAGRQCIEHYRRLRRYCVFSHEELICKMAACPEKLDLNLAAAVHKEMFIMVQEERRLRKALLEKGITEAEREAFELLPDDERQCIKCKTTCFLSALACYDCPDGLVCLSHINDLCKCSSSRQYLRYRYTLDELPAMLHKLKVRAESFDTWANKVRVALEVEDGRKRSLEELRALESEARERRFPNSELLQQLKNCLSEAEACVSRALGLVSGQEAGPHRVAGLQMTLTELRAFLDQMNNLPCAMHQIGDVKGVLEQVEAYQAEAREALASLPSSPGLLQSLLERGRQLGVEVPEAQQLQRQVEQARWLDEVKRTLAPSARRGTLAVMRGLLVAGASVAPSPAVDKAQAELQELLTIAERWEEKAHLCLEARQKHPPATLEAIIREAENIPVHLPNIQALKEALAKARAWIADVDEIQNGDHYPCLDDLEGLVAVGRDLPVGLEELRQLELQVLTAHSWREKASKTFLKKNSCYTLLEVLCPCADAGSDSTKRSRWMEKELGLYKSDTELLGLSAQDLRDPGSVIVAFKEGEQKEKEGILQLRRTNSAKPSPLASSSTASSTTSICVCGQVLAGAGALQCDLCQDWFHGRCVSVPRLLSSPRPNPTSSPLLAWWEWDTKFLCPLCMRSRRPRLETILALLVALQRLPVRLPEGEALQCLTERAISWQGRARQALASEDVTALLGRLAELRQRLQAEPRPEEPPNYPAAPASDPLREGSGKDMPKVQGLLENGDSVTSPEKVAPEEGSGKRDLELLSSLLPQLTGPVLELPEATRAPLEELMMEGDLLEVTLDENHSIWQLLQAGQPPDLERIRTLLELEKAERHGSRARGRALERRRRRKVDRGGEGDDPAREELEPKRVRSSGPEAEEVQEEEELEEETGGEGPPAPIPTTGSPSTQENQNGLEPAEGTTSGPSAPFSTLTPRLHLPCPQQPPQQQL.

One can recognise a JmjN domain in the interval 14 to 55; sequence CPVFEPSWAEFRDPLGYIAKIRPIAEKSGICKIRPPADWQPP. The 91-residue stretch at 79–169 folds into the ARID domain; it reads TRVKLNYLDQ…IVYPYEMYQS (91 aa). A compositionally biased stretch (polar residues) spans 197 to 207; it reads LRQSVQPSKFN. The disordered stretch occupies residues 197–227; the sequence is LRQSVQPSKFNSYGRRAKRLQPDPEPTEEDI. Glycyl lysine isopeptide (Lys-Gly) (interchain with G-Cter in SUMO2) cross-links involve residues lysine 205, lysine 229, lysine 244, and lysine 274. Position 287 is a phosphoserine (serine 287). Lysine 295 is covalently cross-linked (Glycyl lysine isopeptide (Lys-Gly) (interchain with G-Cter in SUMO2)). Serine 301 and serine 317 each carry phosphoserine. Residues 326 to 372 form a PHD-type 1 zinc finger; sequence VCRMCSRGDEDDKLLLCDGCDDNYHIFCLLPPLPEIPKGVWRCPKCV. Tyrosine 440 contributes to the 2-oxoglutarate binding site. In terms of domain architecture, JmjC spans 468–634; it reads EYATSGWNLN…AGRQCIEHYR (167 aa). 2 residues coordinate Fe cation: histidine 514 and glutamate 516. 2-oxoglutarate contacts are provided by serine 522, asparagine 524, and lysine 532. Histidine 602 is a binding site for Fe cation. A C5HC2 zinc finger spans residues 707-759; it reads CIKCKTTCFLSALACYDCPDGLVCLSHINDLCKCSSSRQYLRYRYTLDELPAM. Residues serine 893 and serine 897 each carry the phosphoserine modification. Lysine 1127 participates in a covalent cross-link: Glycyl lysine isopeptide (Lys-Gly) (interchain with G-Cter in SUMO2). The disordered stretch occupies residues 1161–1181; that stretch reads ILQLRRTNSAKPSPLASSSTA. Over residues 1169–1181 the composition is skewed to low complexity; it reads SAKPSPLASSSTA. The PHD-type 2 zinc-finger motif lies at 1187–1248; the sequence is ICVCGQVLAG…DTKFLCPLCM (62 aa). Disordered regions lie at residues 1316–1371 and 1444–1560; these read QAEP…GSGK and ERHG…QQQL. The span at 1335-1345 shows a compositional bias: basic and acidic residues; the sequence is PLREGSGKDMP. Position 1359 is a phosphoserine (serine 1359). Positions 1448–1463 are enriched in basic residues; the sequence is SRARGRALERRRRRKV. A compositionally biased stretch (basic and acidic residues) spans 1464–1481; the sequence is DRGGEGDDPAREELEPKR. Over residues 1488 to 1503 the composition is skewed to acidic residues; sequence EAEEVQEEEELEEETG. A compositionally biased stretch (polar residues) spans 1516–1544; sequence SPSTQENQNGLEPAEGTTSGPSAPFSTLT.

It belongs to the JARID1 histone demethylase family. In terms of assembly, part of two distinct complexes, one containing E2F6, and the other containing REST. Interacts with ZMYND8. Requires Fe(2+) as cofactor. As to expression, expressed in all tissues examined. Highest levels found in brain and skeletal muscle.

Its subcellular location is the nucleus. The catalysed reaction is N(6),N(6),N(6)-trimethyl-L-lysyl(4)-[histone H3] + 3 2-oxoglutarate + 3 O2 = L-lysyl(4)-[histone H3] + 3 formaldehyde + 3 succinate + 3 CO2. Its activity is regulated as follows. The inhibitor KDOAM-25 and others inhibit its demethylase activity, resulting to cell cycle arrest in myeloma cells. Its function is as follows. Histone demethylase that specifically demethylates 'Lys-4' of histone H3, thereby playing a central role in histone code. Does not demethylate histone H3 'Lys-9', H3 'Lys-27', H3 'Lys-36', H3 'Lys-79' or H4 'Lys-20'. Demethylates trimethylated and dimethylated but not monomethylated H3 'Lys-4'. Participates in transcriptional repression of neuronal genes by recruiting histone deacetylases and REST at neuron-restrictive silencer elements. Represses the CLOCK-BMAL1 heterodimer-mediated transcriptional activation of the core clock component PER2. This Homo sapiens (Human) protein is Lysine-specific demethylase 5C.